A 295-amino-acid polypeptide reads, in one-letter code: MVAKVLDGLAVSAGIFERLHRACCELENNGVCPKLATVLVGNNPASRSYVLSKHRDCKNIGIQSTLIELPANTSEKELISKVEILNASSDVSGIIVQLPLPESIDQNKVIEAINPDKDADGLHPLNLGYLVTGKQGIVPCTPAGIVKLLEAHRITLEGKTIAVIGRGTTVGRPLGILLSGKGVNATVINIHSRSRNISGLSRIADVVVACAGVKHIVEPSWIKPGAVVVDVGINQSGVSSSGKMILTGDVHPLTKNIASYISPVVGGVGPMTRAMLMSNVINLSERDFRKRLYAS.

NADP(+)-binding positions include 165-167, serine 192, and isoleucine 233; that span reads GRG.

It belongs to the tetrahydrofolate dehydrogenase/cyclohydrolase family. Homodimer.

It carries out the reaction (6R)-5,10-methylene-5,6,7,8-tetrahydrofolate + NADP(+) = (6R)-5,10-methenyltetrahydrofolate + NADPH. It catalyses the reaction (6R)-5,10-methenyltetrahydrofolate + H2O = (6R)-10-formyltetrahydrofolate + H(+). It participates in one-carbon metabolism; tetrahydrofolate interconversion. In terms of biological role, catalyzes the oxidation of 5,10-methylenetetrahydrofolate to 5,10-methenyltetrahydrofolate and then the hydrolysis of 5,10-methenyltetrahydrofolate to 10-formyltetrahydrofolate. The sequence is that of Bifunctional protein FolD from Tropheryma whipplei (strain Twist) (Whipple's bacillus).